The following is a 469-amino-acid chain: Histone chaperone rtt-106 (469 aa).

2 disordered regions span residues 54–73 and 364–469; these read EEPA…PNGA and MAEQ…EGEE. Composition is skewed to basic and acidic residues over residues 364–379 and 402–415; these read MAEQ…ENAK and ELER…QRLQ. 2 stretches are compositionally biased toward acidic residues: residues 416–433 and 440–469; these read DEED…EGES and SEEE…EGEE.

The protein belongs to the RTT106 family. As to quaternary structure, interacts with histones H3 and H4.

It is found in the nucleus. Its subcellular location is the chromosome. In terms of biological role, histones H3 and H4 chaperone involved in the nucleosome formation and heterochromatin silencing. Required for the deposition of H3K56ac-carrying H3-H4 complex onto newly-replicated DNA. Plays a role in the transcriptional regulation of the cell-cycle dependent histone genes by creating a repressive structure at the core histone gene promoter. The chain is Histone chaperone rtt-106 (rtt-106) from Neurospora crassa (strain ATCC 24698 / 74-OR23-1A / CBS 708.71 / DSM 1257 / FGSC 987).